The primary structure comprises 193 residues: Molybdenum cofactor guanylyltransferase (193 aa).

Residues 8–10 (LAG), Lys21, Asp67, and Asp98 contribute to the GTP site. Mg(2+) is bound at residue Asp98.

It belongs to the MobA family. Monomer. Requires Mg(2+) as cofactor.

The protein localises to the cytoplasm. It carries out the reaction Mo-molybdopterin + GTP + H(+) = Mo-molybdopterin guanine dinucleotide + diphosphate. Functionally, transfers a GMP moiety from GTP to Mo-molybdopterin (Mo-MPT) cofactor (Moco or molybdenum cofactor) to form Mo-molybdopterin guanine dinucleotide (Mo-MGD) cofactor. The chain is Molybdenum cofactor guanylyltransferase from Cereibacter sphaeroides (Rhodobacter sphaeroides).